The sequence spans 106 residues: Ribulose bisphosphate carboxylase small subunit (106 aa).

Belongs to the RuBisCO small chain family. In terms of assembly, heterohexadecamer of 8 large and 8 small subunits.

The protein resides in the plastid. The protein localises to the cyanelle. RuBisCO catalyzes two reactions: the carboxylation of D-ribulose 1,5-bisphosphate, the primary event in carbon dioxide fixation, as well as the oxidative fragmentation of the pentose substrate. Both reactions occur simultaneously and in competition at the same active site. Although the small subunit is not catalytic it is essential for maximal activity. This Cyanophora paradoxa protein is Ribulose bisphosphate carboxylase small subunit.